We begin with the raw amino-acid sequence, 278 residues long: Ras-related protein rapC (278 aa).

Position 10–17 (10–17) interacts with GTP; the sequence is GASGTGKT. Residues 32 to 40 carry the Effector region motif; the sequence is YDPTIEDLY. GTP-binding positions include 58 to 62 and 119 to 122; these read DTSGT and NKCD. Disordered regions lie at residues 176-209 and 236-278; these read NGSS…SSSS and STSS…CLIM. 2 stretches are compositionally biased toward low complexity: residues 198 to 209 and 236 to 251; these read GSNNSSINSSSS and STSS…SQTN. At cysteine 275 the chain carries Cysteine methyl ester. Cysteine 275 is lipidated: S-geranylgeranyl cysteine. Positions 276–278 are cleaved as a propeptide — removed in mature form; the sequence is LIM.

It belongs to the small GTPase superfamily. Ras family.

The protein resides in the cell membrane. The enzyme catalyses GTP + H2O = GDP + phosphate + H(+). This Dictyostelium discoideum (Social amoeba) protein is Ras-related protein rapC (rapC).